A 485-amino-acid polypeptide reads, in one-letter code: Protein nucleotidyltransferase YdiU (485 aa).

8 residues coordinate ATP: G85, G87, R88, K108, D120, G121, R171, and R178. D249 functions as the Proton acceptor in the catalytic mechanism. Positions 250 and 259 each coordinate Mg(2+). D259 is an ATP binding site. The interval 462-485 is disordered; sequence LPTTPNYQDPPADGDRSYQTFCGT.

Belongs to the SELO family. It depends on Mg(2+) as a cofactor. Mn(2+) is required as a cofactor.

It catalyses the reaction L-seryl-[protein] + ATP = 3-O-(5'-adenylyl)-L-seryl-[protein] + diphosphate. It carries out the reaction L-threonyl-[protein] + ATP = 3-O-(5'-adenylyl)-L-threonyl-[protein] + diphosphate. The catalysed reaction is L-tyrosyl-[protein] + ATP = O-(5'-adenylyl)-L-tyrosyl-[protein] + diphosphate. The enzyme catalyses L-histidyl-[protein] + UTP = N(tele)-(5'-uridylyl)-L-histidyl-[protein] + diphosphate. It catalyses the reaction L-seryl-[protein] + UTP = O-(5'-uridylyl)-L-seryl-[protein] + diphosphate. It carries out the reaction L-tyrosyl-[protein] + UTP = O-(5'-uridylyl)-L-tyrosyl-[protein] + diphosphate. In terms of biological role, nucleotidyltransferase involved in the post-translational modification of proteins. It can catalyze the addition of adenosine monophosphate (AMP) or uridine monophosphate (UMP) to a protein, resulting in modifications known as AMPylation and UMPylation. In Teredinibacter turnerae (strain ATCC 39867 / T7901), this protein is Protein nucleotidyltransferase YdiU.